A 469-amino-acid chain; its full sequence is Chromosomal replication initiator protein DnaA (469 aa).

The segment at 1-83 (MSEWDYKIFW…KKISIDFIIK (83 aa)) is domain I, interacts with DnaA modulators. Residues 83 to 128 (KPNTSEDLSKAENEGGNDKKEDAAKPSSAESKKKSVKTEGGRGQHP) are domain II. Positions 89–131 (DLSKAENEGGNDKKEDAAKPSSAESKKKSVKTEGGRGQHPDLR) are disordered. Residues 129–344 (DLRPEYNFED…AALTKLIAYT (216 aa)) are domain III, AAA+ region. The ATP site is built by Gly173, Gly175, Lys176, and Thr177. The interval 345–469 (ELTKKTMDEA…RNTIKENTNK (125 aa)) is domain IV, binds dsDNA.

The protein belongs to the DnaA family. Oligomerizes as a right-handed, spiral filament on DNA at oriC.

The protein localises to the cytoplasm. Plays an essential role in the initiation and regulation of chromosomal replication. ATP-DnaA binds to the origin of replication (oriC) to initiate formation of the DNA replication initiation complex once per cell cycle. Binds the DnaA box (a 9 base pair repeat at the origin) and separates the double-stranded (ds)DNA. Forms a right-handed helical filament on oriC DNA; dsDNA binds to the exterior of the filament while single-stranded (ss)DNA is stabiized in the filament's interior. The ATP-DnaA-oriC complex binds and stabilizes one strand of the AT-rich DNA unwinding element (DUE), permitting loading of DNA polymerase. After initiation quickly degrades to an ADP-DnaA complex that is not apt for DNA replication. Binds acidic phospholipids. This is Chromosomal replication initiator protein DnaA from Treponema denticola (strain ATCC 35405 / DSM 14222 / CIP 103919 / JCM 8153 / KCTC 15104).